We begin with the raw amino-acid sequence, 498 residues long: Glycerol kinase (498 aa).

ADP is bound at residue T12. ATP is bound by residues T12, T13, and S14. T12 is a binding site for sn-glycerol 3-phosphate. R16 is a binding site for ADP. The sn-glycerol 3-phosphate site is built by R82, E83, Y134, and D243. Residues R82, E83, Y134, D243, and Q244 each contribute to the glycerol site. Residues T265 and G308 each coordinate ADP. ATP is bound by residues T265, G308, Q312, and G409. Positions 409 and 413 each coordinate ADP.

The protein belongs to the FGGY kinase family. Homotetramer and homodimer (in equilibrium).

It catalyses the reaction glycerol + ATP = sn-glycerol 3-phosphate + ADP + H(+). It participates in polyol metabolism; glycerol degradation via glycerol kinase pathway; sn-glycerol 3-phosphate from glycerol: step 1/1. Its activity is regulated as follows. Activated by phosphorylation and inhibited by fructose 1,6-bisphosphate (FBP). Key enzyme in the regulation of glycerol uptake and metabolism. Catalyzes the phosphorylation of glycerol to yield sn-glycerol 3-phosphate. In Clostridium botulinum (strain Langeland / NCTC 10281 / Type F), this protein is Glycerol kinase.